Here is a 98-residue protein sequence, read N- to C-terminus: Cystatin-B (98 aa).

M1 carries the post-translational modification N-acetylmethionine. Positions 46–50 (QLVAG) match the Secondary area of contact motif.

This sequence belongs to the cystatin family. As to quaternary structure, able to form dimers stabilized by noncovalent forces.

The protein localises to the cytoplasm. This is an intracellular thiol proteinase inhibitor. The chain is Cystatin-B (CSTB) from Ovis aries (Sheep).